Reading from the N-terminus, the 250-residue chain is Adenosylcobinamide-GDP ribazoletransferase (250 aa).

6 consecutive transmembrane segments (helical) span residues 33-53 (IASY…LFYI), 63-83 (IVMT…HIDG), 109-129 (LGTN…LFLT), 137-157 (LTAL…SMMI), 180-200 (FAIA…LAVF), and 203-223 (ILTI…LRIG).

This sequence belongs to the CobS family. The cofactor is Mg(2+).

The protein localises to the cell membrane. It carries out the reaction alpha-ribazole + adenosylcob(III)inamide-GDP = adenosylcob(III)alamin + GMP + H(+). The catalysed reaction is alpha-ribazole 5'-phosphate + adenosylcob(III)inamide-GDP = adenosylcob(III)alamin 5'-phosphate + GMP + H(+). The protein operates within cofactor biosynthesis; adenosylcobalamin biosynthesis; adenosylcobalamin from cob(II)yrinate a,c-diamide: step 7/7. Joins adenosylcobinamide-GDP and alpha-ribazole to generate adenosylcobalamin (Ado-cobalamin). Also synthesizes adenosylcobalamin 5'-phosphate from adenosylcobinamide-GDP and alpha-ribazole 5'-phosphate. The protein is Adenosylcobinamide-GDP ribazoletransferase of Thermoanaerobacter sp. (strain X514).